A 110-amino-acid chain; its full sequence is Endoribonuclease SymE (110 aa).

The 46-residue stretch at 29–74 (SSYPEYTRIPAITLKGQWLEDAGFTTGTQVDVRVMNGCIVLTAQQP) folds into the SpoVT-AbrB domain.

Belongs to the SymE family.

Its subcellular location is the cytoplasm. Its function is as follows. Involved in the degradation and recycling of damaged RNA. It is itself a target for degradation by the ATP-dependent protease Lon. In Salmonella choleraesuis (strain SC-B67), this protein is Endoribonuclease SymE.